The sequence spans 167 residues: Glutathione peroxidase 1 (167 aa).

Residue Cys41 is part of the active site.

It belongs to the glutathione peroxidase family.

The enzyme catalyses 2 glutathione + H2O2 = glutathione disulfide + 2 H2O. May constitute a glutathione peroxidase-like protective system against oxidative stresses. The sequence is that of Glutathione peroxidase 1 (GPXHA-1) from Helianthus annuus (Common sunflower).